Reading from the N-terminus, the 73-residue chain is Protein F9 homolog (73 aa).

At 1–34 (GHAAANCALARVATALTRRVPASRHGLAEGGTPP) the chain is on the virion surface side. The chain crosses the membrane as a helical span at residues 35–55 (WTLLLAVAAVTVLGVVAVSLL). The Intravirion segment spans residues 56 to 73 (RRALRVRYRFARPAALRA).

It belongs to the chordopoxvirinae L1 protein family.

Its subcellular location is the virion membrane. The polypeptide is Protein F9 homolog (Capra hircus (Goat)).